We begin with the raw amino-acid sequence, 1270 residues long: Microtubule-associated tumor suppressor 1 (1270 aa).

Residues 1-14 (MTDDNSDDKIEDEL) are compositionally biased toward acidic residues. 2 disordered regions span residues 1 to 50 (MTDD…NSAN) and 184 to 236 (FHTA…VTPS). Positions 38-50 (NSSASSVNWNSAN) are enriched in low complexity. Residue Thr186 is modified to Phosphothreonine. The segment covering 197–211 (SGSTSSLSYSTWTSS) has biased composition (low complexity). A compositionally biased stretch (basic and acidic residues) spans 212 to 228 (HSDKTHARETTYDRESF). 3 positions are modified to phosphoserine: Ser381, Ser399, and Ser443. Disordered regions lie at residues 524–560 (DAAL…PRSD) and 592–622 (THSK…SSSN). A compositionally biased stretch (polar residues) spans 533–556 (RPQQTSASSPSSVNSRQQTVLSRT). Ser629 is modified (phosphoserine). 3 stretches are compositionally biased toward polar residues: residues 701-710 (SKTTTTSGRN), 759-776 (VSSS…SSWV), and 797-815 (TGST…TYSN). Residues 701–815 (SKTTTTSGRN…THSELSTYSN (115 aa)) form a disordered region. Residues 940-1231 (IQHLLSEREE…RLSMENEELL (292 aa)) are a coiled coil. 8 positions are modified to phosphoserine: Ser1203, Ser1224, Ser1245, Ser1255, Ser1259, Ser1261, Ser1264, and Ser1268. Positions 1237-1270 (GDLCSPKRSPTSSAIPLQSPRNSGSFPSPSISPR) are disordered. Residues 1244–1270 (RSPTSSAIPLQSPRNSGSFPSPSISPR) show a composition bias toward polar residues.

Belongs to the MTUS1 family. As to quaternary structure, homodimer. Interacts with AGTR2. Interacts with PTPN6. Isoform 1 associates with microtubules. As to expression, ubiquitously expressed (at protein level). Highly expressed in brain. Down-regulated in ovarian carcinoma, pancreas carcinoma, colon carcinoma and head and neck squamous cell carcinoma (HNSCC). Isoform 1 is the major isoform in most peripheral tissues. Isoform 2 is abundant in most peripheral tissues. Isoform 3 is the major isoform in brain, female reproductive tissues, thyroid and heart. Within brain it is highly expressed in corpus callosum and pons. Isoform 6 is brain-specific, it is the major isoform in cerebellum and fetal brain.

Its subcellular location is the mitochondrion. It localises to the golgi apparatus. It is found in the cell membrane. The protein resides in the nucleus. The protein localises to the cytoplasm. Its subcellular location is the cytoskeleton. It localises to the microtubule organizing center. It is found in the centrosome. The protein resides in the spindle. In terms of biological role, cooperates with AGTR2 to inhibit ERK2 activation and cell proliferation. May be required for AGTR2 cell surface expression. Together with PTPN6, induces UBE2V2 expression upon angiotensin-II stimulation. Isoform 1 inhibits breast cancer cell proliferation, delays the progression of mitosis by prolonging metaphase and reduces tumor growth. The sequence is that of Microtubule-associated tumor suppressor 1 (MTUS1) from Homo sapiens (Human).